The chain runs to 209 residues: HTH-type transcriptional repressor BepR (209 aa).

In terms of domain architecture, HTH tetR-type spans 9-69 (AETREAILLA…SIIGRARFPQ (61 aa)). A DNA-binding region (H-T-H motif) is located at residues 32–51 (TLTEIACYAGVTRGAIYFHF).

In terms of biological role, represses expression of bepDE. The polypeptide is HTH-type transcriptional repressor BepR (bepR) (Brucella suis biovar 1 (strain 1330)).